The primary structure comprises 116 residues: Flagellar transcriptional regulator FlhD (116 aa).

It belongs to the FlhD family. Homodimer; disulfide-linked. Forms a heterohexamer composed of two FlhC and four FlhD subunits. Each FlhC binds a FlhD dimer, forming a heterotrimer, and a hexamer assembles by dimerization of two heterotrimers.

The protein resides in the cytoplasm. In terms of biological role, functions in complex with FlhC as a master transcriptional regulator that regulates transcription of several flagellar and non-flagellar operons by binding to their promoter region. Activates expression of class 2 flagellar genes, including fliA, which is a flagellum-specific sigma factor that turns on the class 3 genes. Also regulates genes whose products function in a variety of physiological pathways. The chain is Flagellar transcriptional regulator FlhD from Escherichia coli O9:H4 (strain HS).